We begin with the raw amino-acid sequence, 202 residues long: LexA repressor (202 aa).

The segment at residues 28–48 is a DNA-binding region (H-T-H motif); it reads RAEIAQQLGFRSPNAAEEHLK. Active-site for autocatalytic cleavage activity residues include Ser-119 and Lys-156.

This sequence belongs to the peptidase S24 family. Homodimer.

It carries out the reaction Hydrolysis of Ala-|-Gly bond in repressor LexA.. Represses a number of genes involved in the response to DNA damage (SOS response), including recA and lexA. Binds to the 16 bp palindromic sequence 5'-CTGTATATATATACAG-3'. In the presence of single-stranded DNA, RecA interacts with LexA causing an autocatalytic cleavage which disrupts the DNA-binding part of LexA, leading to derepression of the SOS regulon and eventually DNA repair. The polypeptide is LexA repressor (Pectobacterium carotovorum subsp. carotovorum (strain PC1)).